Consider the following 189-residue polypeptide: Probable nicotinate-nucleotide adenylyltransferase (189 aa).

This sequence belongs to the NadD family.

It catalyses the reaction nicotinate beta-D-ribonucleotide + ATP + H(+) = deamido-NAD(+) + diphosphate. It participates in cofactor biosynthesis; NAD(+) biosynthesis; deamido-NAD(+) from nicotinate D-ribonucleotide: step 1/1. Its function is as follows. Catalyzes the reversible adenylation of nicotinate mononucleotide (NaMN) to nicotinic acid adenine dinucleotide (NaAD). The polypeptide is Probable nicotinate-nucleotide adenylyltransferase (Bacillus cereus (strain G9842)).